The primary structure comprises 468 residues: Zinc-regulated transporter 1 (468 aa).

Positions M1–T17 are cleaved as a signal peptide. The Extracellular segment spans residues E18 to R185. N-linked (GlcNAc...) asparagine glycans are attached at residues N57 and N67. Residues I186–L206 traverse the membrane as a helical segment. At K207–Y217 the chain is on the cytoplasmic side. A helical transmembrane segment spans residues I218–L238. Residues M239–G257 are Extracellular-facing. A helical membrane pass occupies residues T258–L278. The Cytoplasmic segment spans residues R279–S314. A helical membrane pass occupies residues V315 to V335. Residues T336–D338 lie on the Extracellular side of the membrane. Residues V339–L359 traverse the membrane as a helical segment. Residues S360 to K374 are Cytoplasmic-facing. Residues L375–V395 form a helical membrane-spanning segment. Residues L396–T406 are Extracellular-facing. The helical transmembrane segment at L407 to I427 threads the bilayer. At E428 to T447 the chain is on the cytoplasmic side. A helical transmembrane segment spans residues T448–A468.

This sequence belongs to the ZIP transporter (TC 2.A.5) family.

The protein localises to the cell membrane. The catalysed reaction is Zn(2+)(in) = Zn(2+)(out). In terms of biological role, zinc transporter that acts with PRA1 in sequestration of zinc from host tissues during infection. The pH-regulated antigen 1 (PRA1) binds zinc from its environment and then reassociates with ZRT1 to acquire this essential metal. This chain is Zinc-regulated transporter 1 (ZRT101), found in Candida albicans (strain SC5314 / ATCC MYA-2876) (Yeast).